A 589-amino-acid chain; its full sequence is MRTHFCGLIDETLIGHTVTLAGWTDVARNLGGVCFIDLRDHEGIVQVTVDSRAIDQNNSELFKVASGLSYEDVLQVEGVVCARHAVNDKIKTGKVEVIATKIKILNKAAPLPFHAHENPGEDIRLKYRYLDLRRPEMQRMQRTRIKLVQALRRHLDMHGFQDIETPILTKATPEGARDFLVPARMHPGEFYALPQSPQLFKQILMVAGFDRYYQIARCFRDEALRADRQLEFTQLDMEFAFVSERDVQDFVEEMIRRVFKEVAGIELDTTFPRMTWTEAMRRFGSDKPDLRINLELIDVAALVADSTFTPFTDAVAHPNGRVAALRIPSGAVLSRKQIDEYAAYTAKYGATGLAYAKLAPIGEITSPIAKFFSEDAFAALLSHIGAEKGDIVFFGAGNYNKVSDFMGALRLKAGKDFALITADWRPLWVTDFPMFEWDEEAQRYVALHHPFTAPAAIDDIDELRAHARTALSRGYDMVLNGNEIGGGSIRIHRPEMQRAVFELLGITEDEARAKFGFLLDALNYGAPPHGGIAFGIDRIAALIAGTESIRDVIPFPKTTGAQCLMTDAPSSISEEQLSEIHVITKKPTP.

An L-aspartate-binding site is contributed by Glu174. The tract at residues 198-201 (QLFK) is aspartate. Residue Arg220 participates in L-aspartate binding. ATP-binding positions include 220–222 (RDE) and Gln229. His448 is an L-aspartate binding site. Glu483 provides a ligand contact to ATP. Arg490 is an L-aspartate binding site. 535 to 538 (GIDR) is an ATP binding site.

This sequence belongs to the class-II aminoacyl-tRNA synthetase family. Type 1 subfamily. As to quaternary structure, homodimer.

The protein resides in the cytoplasm. It carries out the reaction tRNA(Asp) + L-aspartate + ATP = L-aspartyl-tRNA(Asp) + AMP + diphosphate. Functionally, catalyzes the attachment of L-aspartate to tRNA(Asp) in a two-step reaction: L-aspartate is first activated by ATP to form Asp-AMP and then transferred to the acceptor end of tRNA(Asp). The sequence is that of Aspartate--tRNA ligase from Xylella fastidiosa (strain 9a5c).